Consider the following 73-residue polypeptide: U-scoloptoxin(03)-Ssd1b (73 aa).

The first 23 residues, 1-23, serve as a signal peptide directing secretion; sequence MKSSMAVLLVMGLIIFTLDKCYS.

In terms of processing, contains 3 disulfide bonds. In terms of tissue distribution, expressed by the venom gland.

It localises to the secreted. The protein is U-scoloptoxin(03)-Ssd1b of Scolopendra dehaani (Thai centipede).